The sequence spans 760 residues: Catecholate siderophore receptor Fiu (760 aa).

Residues 1 to 31 (MENNRNFPARQFHSLTFFAGLCIGITPVAQA) form the signal peptide. Residues 67–175 (PVADTTRTMT…PTGSINMISK (109 aa)) enclose the TBDR plug domain. The 581-residue stretch at 180–760 (DSGIDASASI…TFLLTANMHF (581 aa)) folds into the TBDR beta-barrel domain. A TonB C-terminal box motif is present at residues 743–760 (RYHPGEPRTFLLTANMHF).

Belongs to the TonB-dependent receptor family.

The protein localises to the cell outer membrane. Its function is as follows. Involved in the active transport across the outer membrane of iron complexed with catecholate siderophores such as dihydroxybenzoylserine and dihydroxybenzoate. It derives its energy for transport by interacting with the trans-periplasmic membrane protein TonB. Can also transport catechol-substituted cephalosporins. Receptor for microcins M, H47 and E492. The polypeptide is Catecholate siderophore receptor Fiu (fiu) (Escherichia coli O6:H1 (strain CFT073 / ATCC 700928 / UPEC)).